The chain runs to 256 residues: MEEGGQQKGITAAFPPPPPFWKKFTPENLERLEKAKREAEPQALSRKWSPEALHALKLAPELRYLVPPELPKEGSYSLFGEAQSLSTQLPSLEEQGIEQLYPSSLTNETAGPSPDHAYYLLKISKSLLLNFLELVGILSINPEQYEPKIEDIRNLFINAHHLLNLYRPHQSRESLITMMEEQLEQAKEEIREMEQTKERVEIYLRELEAEGRNVSPNDEPVQTPESGPHNTKTQTSESQANGEQVLWKLLDKVEES.

2 disordered regions span residues 1–20 (MEEG…PPPF) and 208–244 (EAEG…NGEQ). Residues 223-242 (TPESGPHNTKTQTSESQANG) are compositionally biased toward polar residues.

It belongs to the Mediator complex subunit 7 family. As to quaternary structure, component of the Mediator complex.

The protein localises to the nucleus. Functionally, component of the Mediator complex, a coactivator involved in the regulated transcription of nearly all RNA polymerase II-dependent genes. Mediator functions as a bridge to convey information from gene-specific regulatory proteins to the basal RNA polymerase II transcription machinery. Mediator is recruited to promoters by direct interactions with regulatory proteins and serves as a scaffold for the assembly of a functional preinitiation complex with RNA polymerase II and the general transcription factors. The sequence is that of Mediator of RNA polymerase II transcription subunit 7 (MED7) from Coccidioides immitis (strain RS) (Valley fever fungus).